Reading from the N-terminus, the 156-residue chain is Guanine deaminase (156 aa).

The region spanning 1–132 (MNHETFLKRA…KPAEERTIPF (132 aa)) is the CMP/dCMP-type deaminase domain. Residue His53 participates in Zn(2+) binding. Glu55 functions as the Proton donor in the catalytic mechanism. The Zn(2+) site is built by Cys83 and Cys86.

This sequence belongs to the cytidine and deoxycytidylate deaminase family. Zn(2+) serves as cofactor.

It catalyses the reaction guanine + H2O + H(+) = xanthine + NH4(+). The protein operates within purine metabolism; guanine degradation; xanthine from guanine: step 1/1. Catalyzes the hydrolytic deamination of guanine, producing xanthine and ammonia. The polypeptide is Guanine deaminase (guaD) (Bacillus subtilis (strain 168)).